A 785-amino-acid polypeptide reads, in one-letter code: MGSLSTLNLIKTCVTLASSEKLNQPSQCYTISTCMKSSNNPPFNYYQINGRKKMSTAIDSSVNAPPEQKYNSTALEHDTEIIEIEDHIECIRRLLRTAGDGRISVSPYDTAWIALIKDLDGHDSPQFPSSMEWVADNQLPDGSWGDEHFVCVYDRLVNTIACVVALRSWNVHAHKCEKGIKYIKENVHKLEDANEEHMTCGFEVVFPALLQRAQSMGIKGIPYNAPVIEEIYNSREKKLKRIPMEVVHKVATSLLFSLEGLENLEWEKLLKLQSPDGSFLTSPSSTAFAFIHTKDRKCFNFINNIVHTFKGGAPHTYPVDIFGRLWAVDRLQRLGISRFFESEIAEFLSHVHRFWSDEAGVFSGRESVFCDIDDTSMGLRLLRMHGYHVDPNVLKNFKQSDKFSCYGGQMMECSSPIYNLYRASQLQFPGEEILEEANKFAYKFLQEKLESNQILDKWLISNHLSDEIKVGLEMPWYATLPRVETSYYIHHYGGGDDVWIGKTLYRMPEISNDTYRELARLDFRRCQAQHQLEWIYMQRWYESCRMQEFGISRKEVLRAYFLASGTIFEVERAKERVAWARSQIISHMIKSFFNKETTSSDQKQALLTELLFGNISASETEKRELDGVVVATLRQFLEGFDIGTRHQVKAAWDVWLRKVEQGEAHGGADAELCTTTLNTCANQHLSSHPDYNTLSKLTNKICHKLSQIQHQKEMKGGIKAKCSINNKEVDIEMQWLVKLVLEKSGLNRKAKQAFLSIAKTYYYRAYYADQTMDAHIFKVLFEPVV.

Lys-238 is a binding site for substrate. Positions 371 and 373 each coordinate Mg(2+). Residues 371–374 (DIDD) carry the DXDD motif motif. Position 457 (Lys-457) interacts with substrate.

It belongs to the terpene synthase family. It depends on Mg(2+) as a cofactor. Present in both leaves and flowers, with higher levels in leaves.

It is found in the plastid. It localises to the chloroplast. It catalyses the reaction (2E,6E,10E)-geranylgeranyl diphosphate = (+)-copalyl diphosphate. Its pathway is secondary metabolite biosynthesis; terpenoid biosynthesis. In terms of biological role, involved in the biosynthesis of labdane-type diterpenoid including marrubiin and other labdane-related furanoid diterpenoids with potential applications as anti-diabetics, analgesics or vasorelaxants. Terpene synthase that produces (+)-copalyl diphosphate ((+)-CPP) from geranylgeranyl diphosphate (GGPP). This is (+)-copalyl diphosphate synthase 3, chloroplastic from Marrubium vulgare (White horehound).